We begin with the raw amino-acid sequence, 252 residues long: Type II secretion system protein N (252 aa).

Topologically, residues 1–4 are cytoplasmic; that stretch reads MKQK. A helical membrane pass occupies residues 5-25; that stretch reads VLIAALFLVAYLGFLLVKLPA. At 26–252 the chain is on the periplasmic side; that stretch reads TLVVRHLPLP…RFPLRYQGRI (227 aa).

The protein belongs to the GSP N family.

The protein localises to the cell inner membrane. Its function is as follows. Involved in a type II secretion system (T2SS, formerly general secretion pathway, GSP) for the export of proteins. This is Type II secretion system protein N (exeN) from Aeromonas hydrophila.